The sequence spans 248 residues: 2,3-bisphosphoglycerate-dependent phosphoglycerate mutase (248 aa).

Residues 8–15, 21–22, Arg60, 87–90, Lys98, 114–115, and 183–184 contribute to the substrate site; these read RHGESEWN, TG, ERHY, RR, and GN. His9 (tele-phosphohistidine intermediate) is an active-site residue. Catalysis depends on Glu87, which acts as the Proton donor/acceptor.

Belongs to the phosphoglycerate mutase family. BPG-dependent PGAM subfamily.

The enzyme catalyses (2R)-2-phosphoglycerate = (2R)-3-phosphoglycerate. The protein operates within carbohydrate degradation; glycolysis; pyruvate from D-glyceraldehyde 3-phosphate: step 3/5. Catalyzes the interconversion of 2-phosphoglycerate and 3-phosphoglycerate. The polypeptide is 2,3-bisphosphoglycerate-dependent phosphoglycerate mutase (Borreliella burgdorferi (strain ATCC 35210 / DSM 4680 / CIP 102532 / B31) (Borrelia burgdorferi)).